We begin with the raw amino-acid sequence, 376 residues long: Erythronate-4-phosphate dehydrogenase (376 aa).

Residues serine 45 and threonine 67 each contribute to the substrate site. Position 147 (aspartate 147) interacts with NAD(+). Arginine 209 is a catalytic residue. Aspartate 233 contributes to the NAD(+) binding site. The active site involves glutamate 238. Histidine 255 serves as the catalytic Proton donor. NAD(+) is bound at residue glycine 258. Tyrosine 259 lines the substrate pocket.

It belongs to the D-isomer specific 2-hydroxyacid dehydrogenase family. PdxB subfamily. Homodimer.

The protein resides in the cytoplasm. It catalyses the reaction 4-phospho-D-erythronate + NAD(+) = (R)-3-hydroxy-2-oxo-4-phosphooxybutanoate + NADH + H(+). The protein operates within cofactor biosynthesis; pyridoxine 5'-phosphate biosynthesis; pyridoxine 5'-phosphate from D-erythrose 4-phosphate: step 2/5. Its function is as follows. Catalyzes the oxidation of erythronate-4-phosphate to 3-hydroxy-2-oxo-4-phosphonooxybutanoate. In Shewanella halifaxensis (strain HAW-EB4), this protein is Erythronate-4-phosphate dehydrogenase.